The following is a 126-amino-acid chain: Protein C10 (126 aa).

A2 is subject to N-acetylalanine.

This sequence belongs to the UPF0456 family. As to expression, ubiquitously expressed, with higher expression in lung and fetal brain.

Its subcellular location is the cytoplasm. In brain, may be required for corpus callosum development. In Homo sapiens (Human), this protein is Protein C10 (C12orf57).